The sequence spans 424 residues: Glucan endo-1,3-alpha-glucosidase agn1 (424 aa).

The signal sequence occupies residues 1–20 (MKLVLFLVLLFSALINLTNA).

The protein belongs to the glycosyl hydrolase 71 family. In terms of assembly, monomer. Not glycosylated.

It is found in the secreted. It localises to the cell wall. It carries out the reaction Endohydrolysis of (1-&gt;3)-alpha-D-glucosidic linkages in isolichenin, pseudonigeran and nigeran.. Has a role in cell separation where it is required for the degradation of the cell wall material surrounding the septum (the septum edging) which must be hydrolyzed before full separation of the daughter cells can occur. Hydrolyzes 1,3-alpha-glucan predominantly into pentasaccharides. The chain is Glucan endo-1,3-alpha-glucosidase agn1 (agn1) from Schizosaccharomyces pombe (strain 972 / ATCC 24843) (Fission yeast).